Here is a 214-residue protein sequence, read N- to C-terminus: Large ribosomal subunit protein uL3 (214 aa).

The interval 134 to 153 (ATHGNSLSHRAPGSIGQNQT) is disordered. Q152 carries the N5-methylglutamine modification.

It belongs to the universal ribosomal protein uL3 family. In terms of assembly, part of the 50S ribosomal subunit. Forms a cluster with proteins L14 and L19. Post-translationally, methylated by PrmB.

Its function is as follows. One of the primary rRNA binding proteins, it binds directly near the 3'-end of the 23S rRNA, where it nucleates assembly of the 50S subunit. The sequence is that of Large ribosomal subunit protein uL3 from Buchnera aphidicola subsp. Baizongia pistaciae (strain Bp).